We begin with the raw amino-acid sequence, 444 residues long: Tryptophan 5-hydroxylase 1 (444 aa).

The ACT domain occupies 19–94; the sequence is TLIFSLKNEV…NVLSVTPPDN (76 aa). Phosphoserine; by PKA is present on Ser-58. The L-tryptophan site is built by Tyr-235, Arg-257, and Thr-265. Fe cation contacts are provided by His-272, His-277, and Glu-317. Residues Ser-336 and Ile-366 each contribute to the L-tryptophan site.

The protein belongs to the biopterin-dependent aromatic amino acid hydroxylase family. As to quaternary structure, homotetramer. Interacts with DNAJC12. Fe(2+) serves as cofactor. Post-translationally, ubiquitinated, leading to its degradation by the proteasome. Ubiquitinated is triggered by phosphorylation. Phosphorylated; triggering degradation by the proteasome.

It carries out the reaction (6R)-L-erythro-5,6,7,8-tetrahydrobiopterin + L-tryptophan + O2 = 5-hydroxy-L-tryptophan + (4aS,6R)-4a-hydroxy-L-erythro-5,6,7,8-tetrahydrobiopterin. Its pathway is aromatic compound metabolism; serotonin biosynthesis; serotonin from L-tryptophan: step 1/2. Oxidizes L-tryptophan to 5-hydroxy-l-tryptophan in the rate-determining step of serotonin biosynthesis. This Oryctolagus cuniculus (Rabbit) protein is Tryptophan 5-hydroxylase 1 (TPH1).